The chain runs to 158 residues: Large ribosomal subunit protein uL15 (158 aa).

Disordered regions lie at residues 1–53 (MRIH…FEGG) and 138–158 (ESAG…SNNE). A compositionally biased stretch (gly residues) spans 23–35 (ISAGQGASGGFGM). Residues 145–158 (QDLSDTSNAPSNNE) show a composition bias toward polar residues.

The protein belongs to the universal ribosomal protein uL15 family. In terms of assembly, part of the 50S ribosomal subunit.

Its function is as follows. Binds to the 23S rRNA. This is Large ribosomal subunit protein uL15 from Crocosphaera subtropica (strain ATCC 51142 / BH68) (Cyanothece sp. (strain ATCC 51142)).